Here is a 323-residue protein sequence, read N- to C-terminus: NADH-cytochrome b5 reductase 2 (323 aa).

A helical membrane pass occupies residues 32 to 48 (LAPIYLGVGLIGLGVGL). The region spanning 72–177 (QGWVDLKLAQ…KGPIPKYPWE (106 aa)) is the FAD-binding FR-type domain. 180–215 (KHKHICLIAGGTGITPMYQLARKIFKDPEDQTKVTL) contacts FAD.

Belongs to the flavoprotein pyridine nucleotide cytochrome reductase family. The cofactor is FAD.

Its subcellular location is the mitochondrion outer membrane. The enzyme catalyses 2 Fe(III)-[cytochrome b5] + NADH = 2 Fe(II)-[cytochrome b5] + NAD(+) + H(+). Functionally, may mediate the reduction of outer membrane cytochrome b5. The polypeptide is NADH-cytochrome b5 reductase 2 (mcr1) (Aspergillus fumigatus (strain ATCC MYA-4609 / CBS 101355 / FGSC A1100 / Af293) (Neosartorya fumigata)).